Consider the following 79-residue polypeptide: Toxin 3FTx-Oxy5 (79 aa).

Residues 1 to 23 form the signal peptide; it reads MKTLLLTLVVMTIVCLDLGYTLT. 4 disulfide bridges follow: Cys24–Cys41, Cys34–Cys59, Cys63–Cys71, and Cys72–Cys77.

It belongs to the three-finger toxin family. Short-chain subfamily. In terms of tissue distribution, expressed by the venom gland.

It localises to the secreted. This chain is Toxin 3FTx-Oxy5, found in Oxyuranus microlepidotus (Inland taipan).